Consider the following 715-residue polypeptide: NADH-ubiquinone oxidoreductase chain 5 (715 aa).

A run of 17 helical transmembrane segments spans residues Met1–Arg21, Leu30–Val50, Leu81–Ile101, Leu119–Gly139, Trp140–Ala160, Phe177–Val197, Leu200–Ala220, Thr241–Met261, Leu274–Phe294, Leu310–Ile330, Asn331–Ala351, Leu366–Met386, Phe403–Leu423, Gly487–Ile507, Thr543–Leu563, Ile647–Ile667, and Ser668–Thr688.

The protein belongs to the complex I subunit 5 family.

It is found in the mitochondrion inner membrane. It carries out the reaction a ubiquinone + NADH + 5 H(+)(in) = a ubiquinol + NAD(+) + 4 H(+)(out). Core subunit of the mitochondrial membrane respiratory chain NADH dehydrogenase (Complex I) that is believed to belong to the minimal assembly required for catalysis. Complex I functions in the transfer of electrons from NADH to the respiratory chain. The immediate electron acceptor for the enzyme is believed to be ubiquinone. The polypeptide is NADH-ubiquinone oxidoreductase chain 5 (ndh-5) (Neurospora crassa (strain ATCC 24698 / 74-OR23-1A / CBS 708.71 / DSM 1257 / FGSC 987)).